Consider the following 617-residue polypeptide: ATP-dependent RNA helicase DBP1 (617 aa).

Residues 1 to 90 (MADLPQKVSN…TSANYNRGGS (90 aa)) are disordered. The segment covering 7–17 (KVSNLSINNKE) has biased composition (polar residues). A compositionally biased stretch (basic and acidic residues) spans 38-58 (PSFERSTPKQEDKVTGGDFFR). The span at 79–90 (GGTSANYNRGGS) shows a compositional bias: polar residues. The short motif at 154–182 (LDFSSPPLDELLMENIKLASFTKPTPVQK) is the Q motif element. The 190-residue stretch at 185 to 374 (IPIVTKGRDL…RDFLDNYIFL (190 aa)) folds into the Helicase ATP-binding domain. 198–205 (AQTGSGKT) lines the ATP pocket. A DEAD box motif is present at residues 318 to 321 (DEAD). In terms of domain architecture, Helicase C-terminal spans 385-545 (NITQRILYVD…EVPTFLSDLS (161 aa)). Residues 542 to 617 (SDLSRQNSRG…GYGNSNASWW (76 aa)) form a disordered region. Residues 580–594 (FGSTRPRNTGTSNWG) are compositionally biased toward polar residues.

Belongs to the DEAD box helicase family. DDX3/DED1 subfamily.

It is found in the cytoplasm. The catalysed reaction is ATP + H2O = ADP + phosphate + H(+). In terms of biological role, ATP-binding RNA helicase involved in translation initiation. Remodels RNA in response to ADP and ATP concentrations by facilitating disruption, but also formation of RNA duplexes. Redundant to DED1, may be required in conditions in which DED1 expression is decreased. The sequence is that of ATP-dependent RNA helicase DBP1 (DBP1) from Saccharomyces cerevisiae (strain YJM789) (Baker's yeast).